The primary structure comprises 279 residues: ESX-1 secretion-associated protein EspG1 (279 aa).

Belongs to the EspG family. In terms of assembly, interacts specifically with ESX-1-dependent PE/PPE proteins.

The protein resides in the cytoplasm. Its function is as follows. Specific chaperone for cognate PE/PPE proteins. Plays an important role in preventing aggregation of PE/PPE dimers. The sequence is that of ESX-1 secretion-associated protein EspG1 from Mycobacterium marinum (strain ATCC BAA-535 / M).